We begin with the raw amino-acid sequence, 282 residues long: Elongation factor Ts (282 aa).

An involved in Mg(2+) ion dislocation from EF-Tu region spans residues 80 to 83 (TDFV).

Belongs to the EF-Ts family.

The protein localises to the cytoplasm. In terms of biological role, associates with the EF-Tu.GDP complex and induces the exchange of GDP to GTP. It remains bound to the aminoacyl-tRNA.EF-Tu.GTP complex up to the GTP hydrolysis stage on the ribosome. The polypeptide is Elongation factor Ts (Protochlamydia amoebophila (strain UWE25)).